The primary structure comprises 471 residues: MSQAYSSSQRVSSYRRTFGGAPSFPLGSPLSSPVFPRAGFGTKGSSSSVTSRVYQVSRTSGGAGGLGPLRASRLGATRVPSSSYGAGELLDFSLADAVNQEFLTTRTNEKVELQELNDRFANYIEKVRFLEQQNAALAAEVNRLKGREPTRVAEIYEEELRELRRQVEVLTNQRARVDVERDNLLDDLQRLKAKLQEEIQLKEEAENNLAAFRADVDAATLARIDLERRIESLNEEIAFLKKVHEEEIRELQAQLQEQQVQVEMDMSKPDLTAALRDIRAQYETIAAKNISEAEEWYKSKVSDLTQAANKNNDALRQAKQEMMEYRHQIQSYTCEIDALKGTNDSLMRQMRELEDRFASEASGYQDNIARLEEEIRHLKDEMARHLREYQDLLNVKMALDVEIATYRKLLEGEESRINLPIQTFSALNFRETSPEQRGSEVHTKKTVMIKTIETRDGEVVSEATQQQHEVL.

A head region spans residues 2–109 (SQAYSSSQRV…QEFLTTRTNE (108 aa)). Phosphoserine; by CDK1 is present on Ser-7. Ser-12 is modified (phosphoserine; by AURKB). The residue at position 16 (Arg-16) is an Omega-N-methylarginine. Thr-17 is modified (phosphothreonine; by AURKB and ROCK1). Residue Ser-28 is modified to Phosphoserine; by CDK1. Ser-31 carries the phosphoserine modification. Residue Ser-32 is modified to Phosphoserine; by CDK1. At Arg-37 the chain carries Asymmetric dimethylarginine; alternate. Arg-37 bears the Omega-N-methylarginine; alternate mark. Residue Ser-45 is modified to Phosphoserine. ADP-ribosylarginine is present on Arg-58. Ser-60 bears the Phosphoserine; by AURKB mark. Omega-N-methylarginine is present on Arg-70. A Phosphothreonine; by ROCK1 modification is found at Thr-77. Ser-81 carries the phosphoserine modification. The IF rod domain occupies 109–417 (EKVELQELND…KLLEGEESRI (309 aa)). Residues 110–142 (KVELQELNDRFANYIEKVRFLEQQNAALAAEVN) are coil 1A. The interval 143-152 (RLKGREPTRV) is linker 1. The coil 1B stretch occupies residues 153–253 (AEIYEEELRE…HEEEIRELQA (101 aa)). A linker 12 region spans residues 254 to 269 (QLQEQQVQVEMDMSKP). The segment at 269 to 416 (PDLTAALRDI…RKLLEGEESR (148 aa)) is interaction with NEB. The coil 2A stretch occupies residues 270 to 288 (DLTAALRDIRAQYETIAAK). Residues 289–296 (NISEAEEW) form a linker 2 region. Residues Ser-291, Ser-359, Ser-362, and Ser-425 each carry the phosphoserine modification. The tract at residues 297–413 (YKSKVSDLTQ…ATYRKLLEGE (117 aa)) is coil 2B. The interval 414-471 (ESRINLPIQTFSALNFRETSPEQRGSEVHTKKTVMIKTIETRDGEVVSEATQQQHEVL) is tail. The tract at residues 439 to 454 (SEVHTKKTVMIKTIET) is interaction with CRYAB.

It belongs to the intermediate filament family. As to quaternary structure, homomer. Interacts with DST. Interacts with MTM1. Interacts with EPPK1; interaction is dependent of higher-order structure of intermediate filament. Interacts with CRYAB. Interacts with NEB (via nebulin repeats 160-164). Interacts (via rod region) with NEBL (via nebulin repeats 1-5). Interacts with ASB2; the interaction targets DES for proteasomal degradation. Interacts with PKP1. Interacts with FLII. Post-translationally, ADP-ribosylation prevents ability to form intermediate filaments. Phosphorylation at Ser-7, Ser-28 and Ser-32 by CDK1 and phosphorylation at Ser-60 by AURKB contribute to efficient separation of desmin intermediate filaments during mitosis. In terms of processing, ubiquitination by a SCF-like complex containing ASB2 leads to proteasomal degradation.

The protein localises to the cytoplasm. It localises to the myofibril. Its subcellular location is the sarcomere. The protein resides in the z line. It is found in the cell membrane. The protein localises to the sarcolemma. It localises to the nucleus. Its subcellular location is the cell tip. The protein resides in the nucleus envelope. Muscle-specific type III intermediate filament essential for proper muscular structure and function. Plays a crucial role in maintaining the structure of sarcomeres, inter-connecting the Z-disks and forming the myofibrils, linking them not only to the sarcolemmal cytoskeleton, but also to the nucleus and mitochondria, thus providing strength for the muscle fiber during activity. In adult striated muscle they form a fibrous network connecting myofibrils to each other and to the plasma membrane from the periphery of the Z-line structures. May act as a sarcomeric microtubule-anchoring protein: specifically associates with detyrosinated tubulin-alpha chains, leading to buckled microtubules and mechanical resistance to contraction. Required for nuclear membrane integrity, via anchoring at the cell tip and nuclear envelope, resulting in maintenance of microtubule-derived intracellular mechanical forces. Contributes to the transcriptional regulation of the NKX2-5 gene in cardiac progenitor cells during a short period of cardiomyogenesis and in cardiac side population stem cells in the adult. Plays a role in maintaining an optimal conformation of nebulette (NEB) on heart muscle sarcomeres to bind and recruit cardiac alpha-actin. The sequence is that of Desmin (DES) from Sus scrofa (Pig).